The chain runs to 607 residues: Elongation factor 4 (607 aa).

The tr-type G domain occupies 11–193 (SKIRNFSIIA…QIVEKVPAPT (183 aa)). Residues 23–28 (DHGKST) and 140–143 (NKID) each bind GTP.

This sequence belongs to the TRAFAC class translation factor GTPase superfamily. Classic translation factor GTPase family. LepA subfamily.

It localises to the cell membrane. The enzyme catalyses GTP + H2O = GDP + phosphate + H(+). Its function is as follows. Required for accurate and efficient protein synthesis under certain stress conditions. May act as a fidelity factor of the translation reaction, by catalyzing a one-codon backward translocation of tRNAs on improperly translocated ribosomes. Back-translocation proceeds from a post-translocation (POST) complex to a pre-translocation (PRE) complex, thus giving elongation factor G a second chance to translocate the tRNAs correctly. Binds to ribosomes in a GTP-dependent manner. The sequence is that of Elongation factor 4 from Bacillus cereus (strain ZK / E33L).